Here is a 105-residue protein sequence, read N- to C-terminus: Large ribosomal subunit protein uL24 (105 aa).

The protein belongs to the universal ribosomal protein uL24 family. Part of the 50S ribosomal subunit.

One of two assembly initiator proteins, it binds directly to the 5'-end of the 23S rRNA, where it nucleates assembly of the 50S subunit. Its function is as follows. One of the proteins that surrounds the polypeptide exit tunnel on the outside of the subunit. The protein is Large ribosomal subunit protein uL24 of Chromohalobacter salexigens (strain ATCC BAA-138 / DSM 3043 / CIP 106854 / NCIMB 13768 / 1H11).